Reading from the N-terminus, the 399-residue chain is 1-deoxy-D-xylulose 5-phosphate reductoisomerase (399 aa).

Positions 13, 14, 15, 16, and 127 each coordinate NADPH. Lysine 128 provides a ligand contact to 1-deoxy-D-xylulose 5-phosphate. An NADPH-binding site is contributed by glutamate 129. Mn(2+) is bound at residue aspartate 153. Residues serine 154, glutamate 155, serine 187, and histidine 210 each contribute to the 1-deoxy-D-xylulose 5-phosphate site. Glutamate 155 provides a ligand contact to Mn(2+). Glycine 216 provides a ligand contact to NADPH. 1-deoxy-D-xylulose 5-phosphate-binding residues include serine 223, asparagine 228, lysine 229, and glutamate 232. Glutamate 232 serves as a coordination point for Mn(2+).

This sequence belongs to the DXR family. Mg(2+) serves as cofactor. Mn(2+) is required as a cofactor.

It carries out the reaction 2-C-methyl-D-erythritol 4-phosphate + NADP(+) = 1-deoxy-D-xylulose 5-phosphate + NADPH + H(+). Its pathway is isoprenoid biosynthesis; isopentenyl diphosphate biosynthesis via DXP pathway; isopentenyl diphosphate from 1-deoxy-D-xylulose 5-phosphate: step 1/6. Catalyzes the NADPH-dependent rearrangement and reduction of 1-deoxy-D-xylulose-5-phosphate (DXP) to 2-C-methyl-D-erythritol 4-phosphate (MEP). The chain is 1-deoxy-D-xylulose 5-phosphate reductoisomerase from Bordetella avium (strain 197N).